The primary structure comprises 265 residues: Uronate dehydrogenase (265 aa).

Residues 12–13 (QL), 32–34 (DLS), 49–50 (DL), and 69–73 (LGGIS) each bind NAD(+). Residues Ser-73 and 109-111 (SNH) contribute to the substrate site. The active-site Proton acceptor is Tyr-134. NAD(+) is bound at residue Lys-138. Ser-163 contributes to the substrate binding site. Residue Cys-164 coordinates NAD(+). Arg-172 is a binding site for substrate.

This sequence belongs to the NAD(P)-dependent epimerase/dehydratase family. As to quaternary structure, homohexamer.

The enzyme catalyses beta-D-galacturonate + NAD(+) = D-galactaro-1,5-lactone + NADH + H(+). It catalyses the reaction beta-D-glucuronate + NAD(+) = D-glucaro-1,5-lactone + NADH + H(+). Its pathway is carbohydrate acid metabolism; D-galacturonate degradation via prokaryotic oxidative pathway. Its function is as follows. Catalyzes the oxidation of D-galacturonate and D-glucuronate to galactarate and D-glucarate, respectively. In fact, in water solution the substrate D-galacturonate is predominantly in pyranosic form whose beta anomer is converted by the enzyme to D-galactaro-1,5-lactone; in solution, this reaction product rearranges to the more stable D-galactaro-1,4-lactone. Makes part of the oxidative degradation pathway of D-galacturonate, which allows A.tumefaciens to utilize D-galacturonate as a sole carbon source. Cannot use NADP(+) instead of NAD(+) as cosubstrate. Is not active on D-galactose, D-glucose, D-galactonate and D-gluconate. The protein is Uronate dehydrogenase (udh) of Agrobacterium fabrum (strain C58 / ATCC 33970) (Agrobacterium tumefaciens (strain C58)).